The chain runs to 555 residues: Formate--tetrahydrofolate ligase (555 aa).

65–72 contacts ATP; the sequence is TPAGEGKS.

It belongs to the formate--tetrahydrofolate ligase family.

It carries out the reaction (6S)-5,6,7,8-tetrahydrofolate + formate + ATP = (6R)-10-formyltetrahydrofolate + ADP + phosphate. The protein operates within one-carbon metabolism; tetrahydrofolate interconversion. This is Formate--tetrahydrofolate ligase from Staphylococcus haemolyticus (strain JCSC1435).